The primary structure comprises 336 residues: Inositol 2-dehydrogenase (336 aa).

It belongs to the Gfo/Idh/MocA family. As to quaternary structure, homotetramer.

The enzyme catalyses myo-inositol + NAD(+) = scyllo-inosose + NADH + H(+). Its function is as follows. Involved in the oxidation of myo-inositol (MI) to 2-keto-myo-inositol (2KMI or 2-inosose). This is Inositol 2-dehydrogenase from Pseudomonas syringae pv. syringae (strain B728a).